The following is a 1623-amino-acid chain: ABC transporter C family member 2 (1623 aa).

A run of 9 helical transmembrane segments spans residues 37–57 (FVLG…IWLA), 76–96 (FLAL…IMGI), 109–129 (FEAF…VMIL), 145–165 (FAVI…LSVK), 172–192 (VLYL…LLFM), 336–356 (AWMG…GVLC), 440–460 (VASL…TVII), 527–547 (FILN…FTLL), and 557–577 (FTSL…PNII). One can recognise an ABC transmembrane type-1 1 domain in the interval 302 to 582 (FWWGGFWKIG…LPNIITQVVN (281 aa)). The region spanning 614-838 (ISIRNGYFSW…GPLFQRLMEN (225 aa)) is the ABC transporter 1 domain. An ATP-binding site is contributed by 649-656 (GSTGEGKT). Residues 842 to 890 (VEEYSEENGEAEADQTAEQPVANGNTNGLQMDGSDDKKSKEGNKKGGKS) are disordered. The segment covering 845–856 (YSEENGEAEADQ) has biased composition (acidic residues). Positions 857-870 (TAEQPVANGNTNGL) are enriched in polar residues. Residues 875-885 (SDDKKSKEGNK) are compositionally biased toward basic and acidic residues. 6 helical membrane passes run 914–934 (ALGG…TEVF), 955–975 (GPLF…LVTL), 1032–1054 (AVFV…LIGI), 1058–1077 (LSLW…YLYY), 1143–1163 (LGIR…SFAV), and 1177–1197 (STMG…TGVL). The region spanning 921–1205 (VMMLLLCYVL…VLRLASLAEN (285 aa)) is the ABC transmembrane type-1 2 domain. Residues 1236 to 1251 (WPSSGSIKFEDVVLRY) form an interaction with calmodulin and FKP42/TWD1 region. In terms of domain architecture, ABC transporter 2 spans 1242–1476 (IKFEDVVLRY…EGSSFSKMVQ (235 aa)). 1276–1283 (GRTGAGKS) is an ATP binding site.

Belongs to the ABC transporter superfamily. ABCC family. Conjugate transporter (TC 3.A.1.208) subfamily. In terms of assembly, interacts with FKBP42/TWD1 and probably with calmodulin (CaM). Ubiquitous, at low levels.

The protein localises to the vacuole membrane. It carries out the reaction ATP + H2O + xenobioticSide 1 = ADP + phosphate + xenobioticSide 2.. Reciprocal promotion of DNP-GS and E(2)17betaG uptake. E(2)17betaG uptake is also stimulated by GSH and S-methyl-glutathione (S-methyl-GS), and, to a lower extent, by GSSG and C3G-GS. Metolachlor-GS and decyl-GS slightly inhibit E(2)17betaG uptake. Its function is as follows. Pump for glutathione S-conjugates. Mediates the transport of S-conjugates such as GSH, S-(2,4-dinitrophenyl)-glutathione (DNP-GS), GSSG, cyanidin 3-glucoside-GS (C3G-GS) and metolachlor-GS (MOC-GS), glucuronides such as 17-beta-estradiol 17-(beta-D-glucuronide) (E(2)17betaG), and of the chlorophyll catabolite such as B.napus nonfluorescent chlorophyll catabolite (Bn-NCC-1). This is ABC transporter C family member 2 (ABCC2) from Arabidopsis thaliana (Mouse-ear cress).